A 142-amino-acid chain; its full sequence is MVLSANDKTNVKNVFTKISGHAEDYGAEALERMFTTYPPTKTYFPHFDLHHGSAQIKAHGKKVVGALIEAVNHIDDMAGALSKLSDLHAQKLRVDPVNFKLLGQCFLVVVAIHHPSVLTPEVHASLDKFLCAVGNVLTAKYR.

Residues 2 to 142 (VLSANDKTNV…VGNVLTAKYR (141 aa)) form the Globin domain. H59 is an O2 binding site. Residue H88 coordinates heme b.

Belongs to the globin family. In terms of assembly, heterotetramer of two alpha chains and two beta chains. Red blood cells.

In terms of biological role, involved in oxygen transport from the lung to the various peripheral tissues. This chain is Hemoglobin subunit alpha-A (HBAA), found in Aquila chrysaetos (Golden eagle).